The following is a 333-amino-acid chain: Glycogenin-1 (333 aa).

The residue at position 2 (Thr-2) is an N-acetylthreonine. Residues Leu-9, Thr-11, Asn-12, and Tyr-15 each coordinate UDP. UDP-alpha-D-glucose-binding residues include Leu-9, Thr-11, Asn-12, and Tyr-15. Ser-44 is subject to Phosphoserine; by PKA; in vitro. Position 77 (Arg-77) interacts with UDP. Positions 77, 86, 102, 103, 104, 133, 134, 160, 163, and 164 each coordinate UDP-alpha-D-glucose. The UDP site is built by Asp-102, Ala-103, and Asp-104. Asp-102 is a Mn(2+) binding site. Asp-104 contacts Mn(2+). A glycan (O-linked (Glc...) tyrosine) is linked at Tyr-195. Residues His-212, Gly-215, and Lys-218 each contribute to the UDP site. His-212 is a binding site for Mn(2+). The UDP-alpha-D-glucose site is built by Gly-215 and Lys-218. The tract at residues 284 to 316 is interaction with GYS1; it reads SHLSLGETPATTQPFVSSEERKERWEQGQADYM.

This sequence belongs to the glycosyltransferase 8 family. Glycogenin subfamily. In terms of assembly, part of the GYS1-GYG1 complex, a heterooctamer composed of a tetramer of GYS1 and 2 dimers of GYG1, where each GYS1 protomer binds to one GYG1 subunit (via GYG1 C-terminus); the GYS1 tetramer may dissociate from GYG1 dimers to continue glycogen polymerization on its own. May also form a heterooctamer complex with GYS2 (via GYG1 C-terminus). Mn(2+) serves as cofactor. Self-glycosylated by the transfer of glucose residues from UDP-glucose to itself, forming an alpha-1,4-glycan of around 10 residues attached to Tyr-195. Post-translationally, phosphorylated. As to expression, detected in heart, skeletal muscle, brain and testis, and at lower levels in kidney.

It localises to the cytoplasm. Its subcellular location is the nucleus. The catalysed reaction is L-tyrosyl-[glycogenin] + UDP-alpha-D-glucose = alpha-D-glucosyl-L-tyrosyl-[glycogenin] + UDP + H(+). It carries out the reaction [1,4-alpha-D-glucosyl](n)-L-tyrosyl-[glycogenin] + UDP-alpha-D-glucose = [1,4-alpha-D-glucosyl](n+1)-L-tyrosyl-[glycogenin] + UDP + H(+). Its pathway is glycan biosynthesis; glycogen biosynthesis. In terms of biological role, glycogenin participates in the glycogen biosynthetic process along with glycogen synthase and glycogen branching enzyme. It catalyzes the formation of a short alpha (1,4)-glucosyl chain covalently attached via a glucose 1-O-tyrosyl linkage to internal tyrosine residues and these chains act as primers for the elongation reaction catalyzed by glycogen synthase. In Oryctolagus cuniculus (Rabbit), this protein is Glycogenin-1 (GYG1).